A 603-amino-acid chain; its full sequence is Coiled-coil domain-containing protein 148 (603 aa).

Coiled-coil stretches lie at residues 365–429 and 461–510; these read LAKD…KKKK and EQSL…KQVA.

This chain is Coiled-coil domain-containing protein 148 (CCDC148), found in Macaca fascicularis (Crab-eating macaque).